The chain runs to 122 residues: Large ribosomal subunit protein uL14 (122 aa).

Belongs to the universal ribosomal protein uL14 family. As to quaternary structure, part of the 50S ribosomal subunit. Forms a cluster with proteins L3 and L19. In the 70S ribosome, L14 and L19 interact and together make contacts with the 16S rRNA in bridges B5 and B8.

Binds to 23S rRNA. Forms part of two intersubunit bridges in the 70S ribosome. This chain is Large ribosomal subunit protein uL14, found in Acidothermus cellulolyticus (strain ATCC 43068 / DSM 8971 / 11B).